Reading from the N-terminus, the 603-residue chain is MIRHRLRLALSAAPVTATGRRTRSKTAPRRSLSTQQTQSSASSSSNNLDGDGRAFVPLRKQLKDESKAKRLTGRGKRSKSASSQVEGWELTVGIEVHAQLDTDSKLFSRASAAHDDAPNANVALFDLAFPGSQPWFQPATLIPALRAAIAFGCEIQSVSHFDRKHYFYQDQPAGYQITQYYEPYARSGALWLYPHDGIAPEDGDAVRVGIKQIQMEQDTAKSQELPSHTVLLDFNRVSRPLIEIITLPEIHSPATAAACVRKIQALLQSCGAVNTGMEMGGLRADVNVSVRRTGQVEQHGYEGVSGLGQRTEIKNLSSFKAVEDAIIAERDRQIAVLEGGGKVEGETRGWTIGSTETKRLREKEGSVDYRYMPDPDIGPVVVGAELVERLRTSMPPSPDELLRMLTQDPMYMLTVEDAKPLIELDDCARLEYYLDAVDSLVVLQRDAAAAAAASAASTVSATGKTVGNWVLHELGGLFSRADAAWDGERVPASSLAAIVHLVGTKQITGSTAKSLLSTVFAGEHGGRTVQEMVEQDGLLLRPLAQEEYVSMARTVMAQHPQLVEQIRQGQQGKIGFFVGQIKRMGERGRVEAQRAEEAVRSLL.

The transit peptide at 1–32 (MIRHRLRLALSAAPVTATGRRTRSKTAPRRSL) directs the protein to the mitochondrion. A disordered region spans residues 12–59 (AAPVTATGRRTRSKTAPRRSLSTQQTQSSASSSSNNLDGDGRAFVPLR). Low complexity predominate over residues 31–48 (SLSTQQTQSSASSSSNNL).

It belongs to the GatB/GatE family. GatB subfamily. As to quaternary structure, subunit of the heterotrimeric GatCAB amidotransferase (AdT) complex, composed of A, B and C subunits.

Its subcellular location is the mitochondrion. The catalysed reaction is L-glutamyl-tRNA(Gln) + L-glutamine + ATP + H2O = L-glutaminyl-tRNA(Gln) + L-glutamate + ADP + phosphate + H(+). Its function is as follows. Allows the formation of correctly charged Gln-tRNA(Gln) through the transamidation of misacylated Glu-tRNA(Gln) in the mitochondria. The reaction takes place in the presence of glutamine and ATP through an activated gamma-phospho-Glu-tRNA(Gln). The protein is Glutamyl-tRNA(Gln) amidotransferase subunit B, mitochondrial of Arthroderma otae (strain ATCC MYA-4605 / CBS 113480) (Microsporum canis).